We begin with the raw amino-acid sequence, 320 residues long: Ribosomal large subunit pseudouridine synthase D (320 aa).

One can recognise an S4 RNA-binding domain in the interval 18-90; the sequence is QRLDQIAAQL…IELEIVYEDE (73 aa). Aspartate 138 is an active-site residue.

It belongs to the pseudouridine synthase RluA family.

The protein localises to the cytoplasm. It carries out the reaction uridine(1911/1915/1917) in 23S rRNA = pseudouridine(1911/1915/1917) in 23S rRNA. Responsible for synthesis of pseudouridine from uracil at positions 1911, 1915 and 1917 in 23S ribosomal RNA. The polypeptide is Ribosomal large subunit pseudouridine synthase D (rluD) (Pseudomonas aeruginosa (strain ATCC 15692 / DSM 22644 / CIP 104116 / JCM 14847 / LMG 12228 / 1C / PRS 101 / PAO1)).